Reading from the N-terminus, the 209-residue chain is Bcl-2 homologous antagonist/killer (209 aa).

Residues M1–D28 are disordered. A2 carries the N-acetylalanine modification. Residues P18–Q27 show a composition bias toward polar residues. Positions V72 to R86 match the BH3 motif. The BH1 signature appears at S115 to Y134. Residues D158 and H162 each coordinate Zn(2+). The BH2 signature appears at R167–R182. A helical transmembrane segment spans residues I186 to V203.

It belongs to the Bcl-2 family. In terms of assembly, homodimer. Formation of the homodimer is zinc-dependent. Forms heterodimers with BCL2 and BCL2L1 isoform Bcl-X(L). Forms heterooligomers with BAX. Interacts with BCL2A1. Interacts withRTL10/BOP. Interacts with VDAC1. Interacts with GIMAP3/IAN4 and GIMAP5/IAN5. (Microbial infection) Interacts with gamma-herpesvirus 68 protein vBCL2. In terms of tissue distribution, widely expressed.

The protein resides in the mitochondrion outer membrane. In the presence of an appropriate stimulus, accelerates programmed cell death by binding to, and antagonizing the anti-apoptotic action of BCL2. The protein is Bcl-2 homologous antagonist/killer (Bak1) of Mus musculus (Mouse).